Reading from the N-terminus, the 90-residue chain is Iron oxidase (90 aa).

Residues 1 to 37 constitute a signal peptide (tat-type signal); the sequence is MSEKDKMITRRDALRNIAVVVGSVATTTMMGVGVADA. Positions 57, 60, 69, and 82 each coordinate [4Fe-4S] cluster.

The protein belongs to the high-potential iron-sulfur protein (HiPIP) family. Homomultimer. In terms of processing, predicted to be exported by the Tat system. The position of the signal peptide cleavage has been experimentally proven.

It localises to the periplasm. In terms of biological role, catalyzes the oxidation of Fe(2+) to Fe(3+) coupled to cytochrome c552 reduction. This Acidithiobacillus ferrooxidans (Thiobacillus ferrooxidans) protein is Iron oxidase (iro).